The sequence spans 270 residues: BPI fold-containing family A member 5 (270 aa).

An N-terminal signal peptide occupies residues 1 to 19; it reads MFLAGSFIVLCGLLAQSTA. An intrachain disulfide couples C196 to C238.

The protein belongs to the BPI/LBP/Plunc superfamily. Plunc family. Expressed in interpapillar epithelium of the anterior part of the tongue.

Its subcellular location is the secreted. May play a role in innate immunity in the oral cavity. The protein is BPI fold-containing family A member 5 (Bpifa5) of Mus musculus (Mouse).